The sequence spans 229 residues: Putative N-acetylmannosamine-6-phosphate 2-epimerase 2 (229 aa).

Belongs to the NanE family.

It catalyses the reaction an N-acyl-D-glucosamine 6-phosphate = an N-acyl-D-mannosamine 6-phosphate. It participates in amino-sugar metabolism; N-acetylneuraminate degradation; D-fructose 6-phosphate from N-acetylneuraminate: step 3/5. In terms of biological role, converts N-acetylmannosamine-6-phosphate (ManNAc-6-P) to N-acetylglucosamine-6-phosphate (GlcNAc-6-P). This is Putative N-acetylmannosamine-6-phosphate 2-epimerase 2 (nanE2) from Salmonella typhimurium (strain LT2 / SGSC1412 / ATCC 700720).